The primary structure comprises 240 residues: Putative protein FAM10A4 (240 aa).

Residues 38–94 (MGGTATQKAKSEENTKEEKPDSKVEEDLKADEPSSEESDLEIDKEGVIEPDTDAPQE) are disordered. Positions 46-69 (AKSEENTKEEKPDSKVEEDLKADE) are enriched in basic and acidic residues. The span at 85-94 (IEPDTDAPQE) shows a compositional bias: acidic residues. TPR repeat units follow at residues 110–143 (ANDK…NPRL), 145–177 (ILYA…NPDS), and 179–211 (QPYK…DYDE). Residues 220–240 (VQPRAQKIAEHQRKYERKREE) are disordered. Over residues 226-240 (KIAEHQRKYERKREE) the composition is skewed to basic and acidic residues.

The protein belongs to the FAM10 family. As to expression, highly expressed in bone marrow and weakly in placenta, pancreas, heart and HeLa cell line.

The protein resides in the cytoplasm. The polypeptide is Putative protein FAM10A4 (ST13P4) (Homo sapiens (Human)).